Consider the following 396-residue polypeptide: Acetate kinase (396 aa).

Asn-7 provides a ligand contact to Mg(2+). Residue Lys-14 participates in ATP binding. Arg-88 is a substrate binding site. The active-site Proton donor/acceptor is the Asp-145. ATP contacts are provided by residues 205–209 (HLGNG), 279–281 (DFR), and 327–331 (GIGEN). Glu-381 lines the Mg(2+) pocket.

This sequence belongs to the acetokinase family. In terms of assembly, homodimer. The cofactor is Mg(2+). Requires Mn(2+) as cofactor.

The protein resides in the cytoplasm. It carries out the reaction acetate + ATP = acetyl phosphate + ADP. Its pathway is metabolic intermediate biosynthesis; acetyl-CoA biosynthesis; acetyl-CoA from acetate: step 1/2. Functionally, catalyzes the formation of acetyl phosphate from acetate and ATP. Can also catalyze the reverse reaction. This chain is Acetate kinase, found in Campylobacter jejuni (strain RM1221).